A 384-amino-acid chain; its full sequence is WD repeat-containing protein 74 (384 aa).

WD repeat units follow at residues 40–80 (RREE…FLSQ), 83–122 (CPGG…ASSD), 128–168 (KVGP…EPVF), 179–220 (DLRV…RRPV), 224–266 (TYGE…GCLK), and 267–306 (GLAG…GLEH). Serine 214 carries the post-translational modification Phosphoserine. Lysine 311 bears the N6-methyllysine mark. Residues 320 to 384 (SGRDNWEDEP…KKKRPGSTSP (65 aa)) form a required for nucleolar and nuclear location region. Residues 323 to 384 (DNWEDEPQEP…KKKRPGSTSP (62 aa)) form a disordered region. The span at 371–384 (QRRKKKKRPGSTSP) shows a compositional bias: basic residues.

Isoform 1 interacts (through WDR repeats) with NVL; the interaction is independent of RNA or pre-60S ribosome particles. Isoform 2 does not interact with NVL. Interacts with MTREX; the interaction dissociation in a late stage of rRNA synthesis is required for appropriate maturation of pre-60S particles and depends on the ATPase activity of NVL.

It is found in the nucleus. The protein resides in the nucleolus. Functionally, regulatory protein of the MTREX-exosome complex involved in the synthesis of the 60S ribosomal subunit. Participates in an early cleavage of the pre-rRNA processing pathway in cooperation with NVL. Required for blastocyst formation, is necessary for RNA transcription, processing and/or stability during preimplantation development. This chain is WD repeat-containing protein 74 (Wdr74), found in Mus musculus (Mouse).